We begin with the raw amino-acid sequence, 88 residues long: Putative membrane protein insertion efficiency factor (88 aa).

A disordered region spans residues 65–88 (LDFVPPKKDKNDDSGHTCKAHHHH). Residues 69–80 (PPKKDKNDDSGH) are compositionally biased toward basic and acidic residues.

It belongs to the UPF0161 family.

It localises to the cell membrane. In terms of biological role, could be involved in insertion of integral membrane proteins into the membrane. This Listeria innocua serovar 6a (strain ATCC BAA-680 / CLIP 11262) protein is Putative membrane protein insertion efficiency factor.